The chain runs to 655 residues: Ubiquilin-3 (655 aa).

The Ubiquitin-like domain occupies 22–98; the sequence is IKVTVKTPKD…LVIKRQHRAM (77 aa). Residues 102–124 are disordered; the sequence is CPAASVPTQGPSPGSLPQPSSIY. Over residues 110-122 the composition is skewed to low complexity; that stretch reads QGPSPGSLPQPSS. In terms of domain architecture, STI1 spans 194–233; the sequence is NPHMQQLIQHNPEIGHILNNPEIMRQTLEFLRNPAMMQEM. Disordered regions lie at residues 277–330, 364–399, and 412–447; these read PFAT…PDIR, ASAL…LPEE, and FLRY…LVSG. Low complexity predominate over residues 279–290; the sequence is ATATTDNATTTT. Residues 318–330 are compositionally biased toward basic and acidic residues; sequence GRQDGDQDAPDIR. Residues 377-395 are compositionally biased toward low complexity; that stretch reads VNRVPPSSPSSQEPGSGQP. Positions 432–441 are enriched in polar residues; that stretch reads KSSTGHSTNL. The 47-residue stretch at 609 to 655 folds into the UBA domain; that stretch reads QLQPEAHFQVQLEQLRSMGFLNREANLQALIATGGDVDAAVEKLRQS.

In terms of tissue distribution, testis specific.

The protein is Ubiquilin-3 (UBQLN3) of Homo sapiens (Human).